A 217-amino-acid polypeptide reads, in one-letter code: DNA repair protein homolog YobH (217 aa).

One can recognise a UmuC domain in the interval 1-68 (MAKAIQSSMW…RPLSKMWGIG (68 aa)).

The protein belongs to the DNA polymerase type-Y family.

This is DNA repair protein homolog YobH (yobH) from Bacillus subtilis (strain 168).